A 365-amino-acid polypeptide reads, in one-letter code: Probable cinnamyl alcohol dehydrogenase (365 aa).

Cys47 is a binding site for Zn(2+). Thr49 is a binding site for NADP(+). Residues His69, Glu70, Cys100, Cys103, Cys106, Cys114, and Cys163 each contribute to the Zn(2+) site. Residues Thr167, 188–193, 211–216, Thr251, Gly275, and 298–300 contribute to the NADP(+) site; these read GLGGVG, SSSSKK, and SFI.

Belongs to the zinc-containing alcohol dehydrogenase family. In terms of assembly, homodimer. The cofactor is Zn(2+).

It catalyses the reaction (E)-cinnamyl alcohol + NADP(+) = (E)-cinnamaldehyde + NADPH + H(+). The catalysed reaction is (E)-coniferol + NADP(+) = (E)-coniferaldehyde + NADPH + H(+). It carries out the reaction (E)-sinapyl alcohol + NADP(+) = (E)-sinapaldehyde + NADPH + H(+). The enzyme catalyses (E)-4-coumaroyl alcohol + NADP(+) = (E)-4-coumaraldehyde + NADPH + H(+). It catalyses the reaction (E)-caffeyl alcohol + NADP(+) = (E)-caffeyl aldehyde + NADPH + H(+). Its pathway is aromatic compound metabolism; phenylpropanoid biosynthesis. Involved in lignin biosynthesis. Catalyzes the final step specific for the production of lignin monomers. Catalyzes the NADPH-dependent reduction of coniferaldehyde, 5-hydroxyconiferaldehyde, sinapaldehyde, 4-coumaraldehyde and caffeyl aldehyde to their respective alcohols. In Saccharum officinarum (Sugarcane), this protein is Probable cinnamyl alcohol dehydrogenase (CAD).